The chain runs to 218 residues: Urease accessory protein UreG (218 aa).

A GTP-binding site is contributed by 22-29 (GPVGSGKT).

Belongs to the SIMIBI class G3E GTPase family. UreG subfamily. As to quaternary structure, homodimer. UreD, UreF and UreG form a complex that acts as a GTP-hydrolysis-dependent molecular chaperone, activating the urease apoprotein by helping to assemble the nickel containing metallocenter of UreC. The UreE protein probably delivers the nickel.

It is found in the cytoplasm. Its function is as follows. Facilitates the functional incorporation of the urease nickel metallocenter. This process requires GTP hydrolysis, probably effectuated by UreG. The polypeptide is Urease accessory protein UreG (Polaromonas sp. (strain JS666 / ATCC BAA-500)).